The primary structure comprises 484 residues: Probable UDP-N-acetylglucosamine pyrophosphorylase (484 aa).

Positions 107–110 match the Substrate binding motif; it reads LAGG. UTP is bound by residues 107 to 110, lysine 121, glutamine 200, and glycine 226; that span reads LAGG. Residue asparagine 227 coordinates substrate. A UTP-binding site is contributed by aspartate 255. Residues 304–305 carry the Substrate binding motif; sequence EY. Residue lysine 377 participates in UTP binding. Residue lysine 407 coordinates substrate.

The protein belongs to the UDPGP type 1 family.

Its subcellular location is the cytoplasm. The enzyme catalyses N-acetyl-alpha-D-glucosamine 1-phosphate + UTP + H(+) = UDP-N-acetyl-alpha-D-glucosamine + diphosphate. Its pathway is nucleotide-sugar biosynthesis; UDP-N-acetyl-alpha-D-glucosamine biosynthesis; UDP-N-acetyl-alpha-D-glucosamine from N-acetyl-alpha-D-glucosamine 1-phosphate: step 1/1. The sequence is that of Probable UDP-N-acetylglucosamine pyrophosphorylase from Caenorhabditis elegans.